The chain runs to 215 residues: Large ribosomal subunit protein uL4 (215 aa).

Residues 43–97 form a disordered region; sequence RRQGTHSTKTRAEVSGGGKKPWRQKGTGRARAGSTRSPIWVGGGKTHTPKPRDYS.

The protein belongs to the universal ribosomal protein uL4 family. Part of the 50S ribosomal subunit.

Its function is as follows. One of the primary rRNA binding proteins, this protein initially binds near the 5'-end of the 23S rRNA. It is important during the early stages of 50S assembly. It makes multiple contacts with different domains of the 23S rRNA in the assembled 50S subunit and ribosome. Functionally, forms part of the polypeptide exit tunnel. In Brachyspira hyodysenteriae (strain ATCC 49526 / WA1), this protein is Large ribosomal subunit protein uL4.